A 345-amino-acid polypeptide reads, in one-letter code: Protein D345L (345 aa).

This sequence belongs to the asfivirus D345L family. In terms of assembly, interacts with IKKA/CHUK and IKBKB.

It localises to the host cytoplasm. In terms of biological role, plays a role in the negative regulation of host NF-kappa-B signaling pathway. Mechanistically, recruits host IKKA/CHUK and IKBKB to suppress their kinase activity towards NFKBIA. The chain is Protein D345L from African swine fever virus (strain Badajoz 1971 Vero-adapted) (Ba71V).